The primary structure comprises 640 residues: Threonine--tRNA ligase (640 aa).

One can recognise a TGS domain in the interval 1 to 61 (MPAITLPDGS…EHDAYVEIVT (61 aa)). A catalytic region spans residues 242–533 (DHRRLGRTQD…LIEHYGGALP (292 aa)). The Zn(2+) site is built by Cys333, His384, and His510.

Belongs to the class-II aminoacyl-tRNA synthetase family. As to quaternary structure, homodimer. Zn(2+) serves as cofactor.

It localises to the cytoplasm. The enzyme catalyses tRNA(Thr) + L-threonine + ATP = L-threonyl-tRNA(Thr) + AMP + diphosphate + H(+). In terms of biological role, catalyzes the attachment of threonine to tRNA(Thr) in a two-step reaction: L-threonine is first activated by ATP to form Thr-AMP and then transferred to the acceptor end of tRNA(Thr). Also edits incorrectly charged L-seryl-tRNA(Thr). The polypeptide is Threonine--tRNA ligase (Halorhodospira halophila (strain DSM 244 / SL1) (Ectothiorhodospira halophila (strain DSM 244 / SL1))).